Reading from the N-terminus, the 217-residue chain is N-(5'-phosphoribosyl)anthranilate isomerase (217 aa).

It belongs to the TrpF family.

The catalysed reaction is N-(5-phospho-beta-D-ribosyl)anthranilate = 1-(2-carboxyphenylamino)-1-deoxy-D-ribulose 5-phosphate. It participates in amino-acid biosynthesis; L-tryptophan biosynthesis; L-tryptophan from chorismate: step 3/5. This Chlorobium phaeobacteroides (strain BS1) protein is N-(5'-phosphoribosyl)anthranilate isomerase.